The following is a 245-amino-acid chain: Alanyl-tRNA editing protein AlaX-M (245 aa).

Zn(2+)-binding residues include histidine 107, histidine 111, cysteine 210, and histidine 214.

Belongs to the class-II aminoacyl-tRNA synthetase family. Editing domain AlaX-M subfamily. Zn(2+) is required as a cofactor.

It localises to the cytoplasm. Functionally, functions in trans to edit the amino acid moiety from mischarged charged tRNA(Ala). The chain is Alanyl-tRNA editing protein AlaX-M (alaXM) from Methanosarcina acetivorans (strain ATCC 35395 / DSM 2834 / JCM 12185 / C2A).